We begin with the raw amino-acid sequence, 247 residues long: Cationic trypsin-3 (247 aa).

Residues 1–15 form the signal peptide; that stretch reads MKALIFLAFLGAAVA. Positions 16 to 24 are cleaved as a propeptide — activation peptide; that stretch reads LPLDDDDDK. One can recognise a Peptidase S1 domain in the interval 25-245; it reads IVGGYTCQKN…YVNWIQQTVA (221 aa). 6 cysteine pairs are disulfide-bonded: Cys-31–Cys-161, Cys-49–Cys-65, Cys-133–Cys-234, Cys-140–Cys-207, Cys-172–Cys-186, and Cys-197–Cys-221. His-64 acts as the Charge relay system in catalysis. Glu-76, Asn-78, Val-81, and Glu-86 together coordinate Ca(2+). Catalysis depends on Asp-108, which acts as the Charge relay system. Ser-201 (charge relay system) is an active-site residue.

The protein belongs to the peptidase S1 family. Ca(2+) serves as cofactor.

The protein resides in the secreted. It localises to the extracellular space. The enzyme catalyses Preferential cleavage: Arg-|-Xaa, Lys-|-Xaa.. In Rattus norvegicus (Rat), this protein is Cationic trypsin-3 (Try3).